Consider the following 347-residue polypeptide: Heat-inducible transcription repressor HrcA (347 aa).

The protein belongs to the HrcA family.

Its function is as follows. Negative regulator of class I heat shock genes (grpE-dnaK-dnaJ and groELS operons). Prevents heat-shock induction of these operons. This Nocardia farcinica (strain IFM 10152) protein is Heat-inducible transcription repressor HrcA.